The chain runs to 108 residues: UPF0145 protein Npun_F4817 (108 aa).

It belongs to the UPF0145 family.

The sequence is that of UPF0145 protein Npun_F4817 from Nostoc punctiforme (strain ATCC 29133 / PCC 73102).